Reading from the N-terminus, the 375-residue chain is Alcohol dehydrogenase E chain (375 aa).

The residue at position 2 (Ser-2) is an N-acetylserine. The Zn(2+) site is built by Cys-47, Ser-49, His-68, Cys-98, Cys-101, Cys-104, Cys-112, and Cys-175. An alcohol is bound by residues Ser-49 and His-68. Ser-49 contacts NAD(+). NAD(+) contacts are provided by residues 200–205 (GLGGVG), Asp-224, Lys-229, Val-293, 293–295 (VGV), Phe-320, and Arg-370.

This sequence belongs to the zinc-containing alcohol dehydrogenase family. Class-I subfamily. In terms of assembly, dimer of identical or non-identical chains of two types (E and S) coded by 2 separate genes at different loci. It depends on Zn(2+) as a cofactor.

The protein resides in the cytoplasm. It catalyses the reaction a primary alcohol + NAD(+) = an aldehyde + NADH + H(+). The catalysed reaction is a secondary alcohol + NAD(+) = a ketone + NADH + H(+). This Equus caballus (Horse) protein is Alcohol dehydrogenase E chain.